The primary structure comprises 720 residues: Connector enhancer of kinase suppressor of ras 1 (720 aa).

The SAM domain maps to W7–L70. The CRIC domain occupies N78 to A164. A PDZ domain is found at K196–P285. The tract at residues P285–R390 is disordered. Residues R304–A317 show a composition bias toward low complexity. 2 positions are modified to phosphoserine: S307 and S314. The segment covering E348–I359 has biased composition (pro residues). Residues V379–R390 show a composition bias toward basic residues. One can recognise a PH domain in the interval R403–S502. Positions Y504–S573 are disordered. Acidic residues predominate over residues C518–E530. The span at S533–P546 shows a compositional bias: low complexity. Polar residues predominate over residues P553–D571. Residues Q615–D646 adopt a coiled-coil conformation. The segment at Q676–L720 is disordered. The span at E678–S695 shows a compositional bias: polar residues.

This sequence belongs to the CNKSR family. In terms of assembly, interacts with RHO and RALGDS. Phosphorylated on tyrosine.

It localises to the cytoplasm. The protein localises to the membrane. Functionally, may function as an adapter protein or regulator of Ras signaling pathways. The sequence is that of Connector enhancer of kinase suppressor of ras 1 (CNKSR1) from Homo sapiens (Human).